A 150-amino-acid polypeptide reads, in one-letter code: Glycophorin-A (150 aa).

Residues Met1–Ala19 form the signal peptide. Residues Leu20–Glu91 lie on the Extracellular side of the membrane. Ser21 carries O-linked (GalNAc...) serine glycosylation. O-linked (GalNAc...) threonine glycans are attached at residues Thr22, Thr23, and Thr29. Residue Ser30 is glycosylated (O-linked (GalNAc...) serine). Thr31 is a glycosylation site (O-linked (GalNAc...) threonine). O-linked (GalNAc...) serine glycosylation is present at Ser32. Thr36 carries O-linked (GalNAc...) threonine glycosylation. Residues Ser38 and Ser41 are each glycosylated (O-linked (GalNAc...) serine). O-linked (GalNAc...) threonine glycosylation occurs at Thr44. N-linked (GlcNAc...) asparagine glycosylation is present at Asn45. 2 O-linked (GalNAc...) threonine glycosylation sites follow: Thr52 and Thr56. Residues Ser63 and Ser66 are each glycosylated (O-linked (GalNAc...) serine). The O-linked (GalNAc...) threonine glycan is linked to Thr69. The helical transmembrane segment at Ile92–Ile114 threads the bilayer. Residues Arg115–Gln150 are Cytoplasmic-facing. The disordered stretch occupies residues Ser121–Gln150. Thr133 carries the phosphothreonine modification. Ser138 and Ser148 each carry phosphoserine.

Belongs to the glycophorin A family. As to quaternary structure, homodimer. Component of the ankyrin-1 complex in the erythrocyte, composed of ANK1, RHCE, RHAG, SLC4A1, EPB42, GYPA, GYPB and AQP1. Interacts with SLC4A1; a GYPA monomer is bound at each end of the SLC4A1 dimer forming a heterotetramer. In terms of assembly, (Microbial infection) Interacts with Streptococcus gordonii hsa protein. (Microbial infection) Interacts (in a sialic acid-independent manner) with P.falciparum MSP1 subunit p83. Post-translationally, the major O-linked glycan are NeuAc-alpha-(2-3)-Gal-beta-(1-3)-[NeuAc-alpha-(2-6)]-GalNAcOH (about 78 %) and NeuAc-alpha-(2-3)-Gal-beta-(1-3)-GalNAcOH (17 %). Minor O-glycans (5 %) include NeuAc-alpha-(2-3)-Gal-beta-(1-3)-[NeuAc-alpha-(2-6)]-GalNAcOH NeuAc-alpha-(2-8)-NeuAc-alpha-(2-3)-Gal-beta-(1-3)-GalNAcOH. About 1% of all O-linked glycans carry blood group A, B and H determinants. They derive from a type-2 precursor core structure, Gal-beta-(1,3)-GlcNAc-beta-1-R, and the antigens are synthesized by addition of fucose (H antigen-specific) and then N-acetylgalactosamine (A antigen-specific) or galactose (B antigen-specific). Specifically O-linked-glycans are NeuAc-alpha-(2-3)-Gal-beta-(1-3)-GalNAcOH-(6-1)-GlcNAc-beta-(4-1)-[Fuc-alpha-(1-2)]-Gal-beta-(3-1)-GalNAc-alpha (about 1%, B antigen-specific) and NeuAc-alpha-(2-3)-Gal-beta-(1-3)-GalNAcOH-(6-1)-GlcNAc-beta-(4-1)-[Fuc-alpha-(1-2)]-Gal-beta (1 %, O antigen-, A antigen- and B antigen-specific).

It is found in the cell membrane. In terms of biological role, component of the ankyrin-1 complex, a multiprotein complex involved in the stability and shape of the erythrocyte membrane. Glycophorin A is the major intrinsic membrane protein of the erythrocyte. The N-terminal glycosylated segment, which lies outside the erythrocyte membrane, has MN blood group receptors. Appears to be important for the function of SLC4A1 and is required for high activity of SLC4A1. May be involved in translocation of SLC4A1 to the plasma membrane. (Microbial infection) Appears to be a receptor for Hepatitis A virus (HAV). Its function is as follows. (Microbial infection) Receptor for P.falciparum erythrocyte-binding antigen 175 (EBA-175); binding of EBA-175 is dependent on sialic acid residues of the O-linked glycans. The protein is Glycophorin-A of Homo sapiens (Human).